The chain runs to 345 residues: tRNA N6-adenosine threonylcarbamoyltransferase (345 aa).

Residues histidine 113 and histidine 117 each coordinate Fe cation. Substrate is bound by residues 142 to 146 (AISGG), aspartate 175, glycine 188, aspartate 192, and asparagine 282. A Fe cation-binding site is contributed by aspartate 310.

Belongs to the KAE1 / TsaD family. Fe(2+) is required as a cofactor.

It localises to the cytoplasm. It carries out the reaction L-threonylcarbamoyladenylate + adenosine(37) in tRNA = N(6)-L-threonylcarbamoyladenosine(37) in tRNA + AMP + H(+). In terms of biological role, required for the formation of a threonylcarbamoyl group on adenosine at position 37 (t(6)A37) in tRNAs that read codons beginning with adenine. Is involved in the transfer of the threonylcarbamoyl moiety of threonylcarbamoyl-AMP (TC-AMP) to the N6 group of A37, together with TsaE and TsaB. TsaD likely plays a direct catalytic role in this reaction. This Bdellovibrio bacteriovorus (strain ATCC 15356 / DSM 50701 / NCIMB 9529 / HD100) protein is tRNA N6-adenosine threonylcarbamoyltransferase.